A 424-amino-acid polypeptide reads, in one-letter code: Chitinase CLP (424 aa).

A signal peptide spans 1–18 (MSLHLLLAVSLCVALASS). In terms of domain architecture, Peptidase A1 spans 43–405 (AATSLYTVPI…DEEKQRLGFS (363 aa)). Residues Asn-139, Asn-345, and Asn-419 are each glycosylated (N-linked (GlcNAc...) asparagine).

It belongs to the peptidase A1 family. As to expression, expressed in roots. Expressed at low levels in leaf sheaths, stems and flowers.

The protein localises to the secreted. The protein resides in the extracellular space. It localises to the apoplast. The enzyme catalyses Random endo-hydrolysis of N-acetyl-beta-D-glucosaminide (1-&gt;4)-beta-linkages in chitin and chitodextrins.. Chitinase that possesses antifungal activity. Inhibits the growth of the fungal pathogen Rhizoctonia solani by degrading the fungal cell wall. Does not possess inhibiting activity against fungal endo-1,4-beta-D-xylanases belonging to glycoside hydrolase family 10 (GH10) and family 11 (GH11). Involved in the regulation of plant growth by regulating the intracellular calcium ion concentration in roots. In Oryza sativa subsp. japonica (Rice), this protein is Chitinase CLP.